The sequence spans 358 residues: Phospho-N-acetylmuramoyl-pentapeptide-transferase (358 aa).

The next 10 helical transmembrane spans lie at 24–44 (FRSI…GPWV), 73–93 (TMGG…WADL), 95–115 (NVFI…GFVD), 134–154 (MFWQ…LPGF), 169–189 (ELGI…SNAV), 197–217 (GLAI…CYIA), 233–253 (GAGE…GFLW), 261–281 (VFMG…LAVL), 286–306 (ILLV…IFQV), and 335–355 (KIIV…ISTL).

It belongs to the glycosyltransferase 4 family. MraY subfamily. The cofactor is Mg(2+).

Its subcellular location is the cell inner membrane. The enzyme catalyses UDP-N-acetyl-alpha-D-muramoyl-L-alanyl-gamma-D-glutamyl-meso-2,6-diaminopimeloyl-D-alanyl-D-alanine + di-trans,octa-cis-undecaprenyl phosphate = di-trans,octa-cis-undecaprenyl diphospho-N-acetyl-alpha-D-muramoyl-L-alanyl-D-glutamyl-meso-2,6-diaminopimeloyl-D-alanyl-D-alanine + UMP. The protein operates within cell wall biogenesis; peptidoglycan biosynthesis. In terms of biological role, catalyzes the initial step of the lipid cycle reactions in the biosynthesis of the cell wall peptidoglycan: transfers peptidoglycan precursor phospho-MurNAc-pentapeptide from UDP-MurNAc-pentapeptide onto the lipid carrier undecaprenyl phosphate, yielding undecaprenyl-pyrophosphoryl-MurNAc-pentapeptide, known as lipid I. This is Phospho-N-acetylmuramoyl-pentapeptide-transferase from Geobacter sp. (strain M21).